Here is a 417-residue protein sequence, read N- to C-terminus: D-amino acid dehydrogenase (417 aa).

Ala-3–Trp-17 contributes to the FAD binding site.

Belongs to the DadA oxidoreductase family. Requires FAD as cofactor.

It catalyses the reaction a D-alpha-amino acid + A + H2O = a 2-oxocarboxylate + AH2 + NH4(+). Oxidative deamination of D-amino acids. In Vibrio vulnificus (strain YJ016), this protein is D-amino acid dehydrogenase.